A 112-amino-acid polypeptide reads, in one-letter code: T cell receptor alpha variable 17 (112 aa).

The first 21 residues, 1–21 (METLLGVSLVILWLQLARVNS), serve as a signal peptide directing secretion. The 91-residue stretch at 22–112 (QQGEEDPQAL…DTASYFCATD (91 aa)) folds into the Ig-like domain. N-linked (GlcNAc...) asparagine glycosylation is found at Asn-38 and Asn-42. A disulfide bridge links Cys-43 with Cys-109.

In terms of assembly, alpha-beta TR is a heterodimer composed of an alpha and beta chain; disulfide-linked. The alpha-beta TR is associated with the transmembrane signaling CD3 coreceptor proteins to form the TR-CD3 (TcR or TCR). The assembly of alpha-beta TR heterodimers with CD3 occurs in the endoplasmic reticulum where a single alpha-beta TR heterodimer associates with one CD3D-CD3E heterodimer, one CD3G-CD3E heterodimer and one CD247 homodimer forming a stable octameric structure. CD3D-CD3E and CD3G-CD3E heterodimers preferentially associate with TR alpha and TR beta chains, respectively. The association of the CD247 homodimer is the last step of TcR assembly in the endoplasmic reticulum and is required for transport to the cell surface.

It is found in the cell membrane. In terms of biological role, v region of the variable domain of T cell receptor (TR) alpha chain that participates in the antigen recognition. Alpha-beta T cell receptors are antigen specific receptors which are essential to the immune response and are present on the cell surface of T lymphocytes. Recognize peptide-major histocompatibility (MH) (pMH) complexes that are displayed by antigen presenting cells (APC), a prerequisite for efficient T cell adaptive immunity against pathogens. Binding of alpha-beta TR to pMH complex initiates TR-CD3 clustering on the cell surface and intracellular activation of LCK that phosphorylates the ITAM motifs of CD3G, CD3D, CD3E and CD247 enabling the recruitment of ZAP70. In turn ZAP70 phosphorylates LAT, which recruits numerous signaling molecules to form the LAT signalosome. The LAT signalosome propagates signal branching to three major signaling pathways, the calcium, the mitogen-activated protein kinase (MAPK) kinase and the nuclear factor NF-kappa-B (NF-kB) pathways, leading to the mobilization of transcription factors that are critical for gene expression and essential for T cell growth and differentiation. The T cell repertoire is generated in the thymus, by V-(D)-J rearrangement. This repertoire is then shaped by intrathymic selection events to generate a peripheral T cell pool of self-MH restricted, non-autoaggressive T cells. Post-thymic interaction of alpha-beta TR with the pMH complexes shapes TR structural and functional avidity. The protein is T cell receptor alpha variable 17 of Homo sapiens (Human).